The sequence spans 309 residues: Sodium/potassium-transporting ATPase subunit beta-1 (309 aa).

Residues 1 to 45 (MSKNNGKGAKGEFEFPQPAKKQTFSEMIYNPQEGTFFGRTGKSWS) are Cytoplasmic-facing. The chain crosses the membrane as a helical; Signal-anchor for type II membrane protein span at residues 46 to 66 (QLLLFYTIFYIVLAALFTICM). The Extracellular portion of the chain corresponds to 67-309 (QGLLSTISDT…GSVTFQILLD (243 aa)). N-linked (GlcNAc...) asparagine glycosylation is present at asparagine 133. Intrachain disulfides connect cysteine 143–cysteine 155 and cysteine 165–cysteine 179. Asparagine 211 is a glycosylation site (N-linked (GlcNAc...) asparagine). A disulfide bridge connects residues cysteine 225 and cysteine 282.

Belongs to the X(+)/potassium ATPases subunit beta family. As to quaternary structure, the sodium/potassium-transporting ATPase is composed of a catalytic alpha subunit, an auxiliary non-catalytic beta subunit and an additional regulatory subunit. Interacts with nkain. In terms of tissue distribution, in embryos, it is expressed in the neurons of the CNS and PNS, in Garland cells and posterior spiracles. In adults, it is concentrated in the thorax and abdomen (muscle tissue, digestive system and Malpighian tubules) and weakly expressed in the head. Expression is diffuse in the nervous system.

It localises to the cell membrane. Functionally, this is the non-catalytic component of the active enzyme, which catalyzes the hydrolysis of ATP coupled with the exchange of Na(+) and K(+) ions across the plasma membrane. The beta subunit regulates, through assembly of alpha/beta heterodimers, the number of sodium pumps transported to the plasma membrane. This Drosophila melanogaster (Fruit fly) protein is Sodium/potassium-transporting ATPase subunit beta-1 (nrv1).